The sequence spans 148 residues: 3-hydroxyacyl-[acyl-carrier-protein] dehydratase FabZ (148 aa).

H48 is a catalytic residue.

The protein belongs to the thioester dehydratase family. FabZ subfamily.

Its subcellular location is the cytoplasm. It catalyses the reaction a (3R)-hydroxyacyl-[ACP] = a (2E)-enoyl-[ACP] + H2O. Functionally, involved in unsaturated fatty acids biosynthesis. Catalyzes the dehydration of short chain beta-hydroxyacyl-ACPs and long chain saturated and unsaturated beta-hydroxyacyl-ACPs. The polypeptide is 3-hydroxyacyl-[acyl-carrier-protein] dehydratase FabZ (Acinetobacter baylyi (strain ATCC 33305 / BD413 / ADP1)).